Here is an 809-residue protein sequence, read N- to C-terminus: MVTTKMTAAFRNPNRRQVATDKVAEKLSSTLSWVKNTVSHTVSQMASQVASPSASLHTTSSSTTLSTPTQSPSSPSKLSPDDLELLAKLEEQNRLIETDSKSLRSVNGSRRNSGSSLVSSSSASSNLSHLEEDSWILWGRIVNEWDDVRKKKEKQVKELVRKGIPHHFRAIVWQLLCNAQSMTIKDQYSELLKMTSPCEKLIRRDIARTYPEHNFFKEKDSLGQEVLFNVMKAYSLVDRELVTVRAVLSSLDCCCMQMPEEEAFCVFVKLMQDYRLRELFKPSMAELGLCMYQFECMIQEYLPELFVHFQSQSFHTSMYASSWFLTIFLTTFPLPIATRIFDIFMSEGLEIVFRVGLALLQMNQAELMQLDMEGMLQHFQKVIPHQFDGGPEKLIQSAYQVKYNSKKMKKLEKEYTTIKTKEMEEQGEIKRLRTENRLLKQRIETLEKHKCSSTYNEDFVLQLEKELVQARLSEAESQCALKEMQDKVLDIEKKNNSFPDENNIARLQEELIAVKLREAEAIMGLKELRQQVRTLEEHWQRHLARTSGRWKDPPKKNAVNELQDELMSIRLREAETQAEIREMKQRMMEMETQNQINSNQLRRAEQEVNSLQEKVCSLSVKNKGLLAQLSEAKRRQAEIECKNKEEVMAVRLREADSIAAVAELQQHIAELEIQKEEGKLQGQLNRSDSNQYIRELKDQIAELTHELRCLKGQRDFSSRPPFDGIHIVSHLIGDDELFHSSDEDFIDSSLQESAIGFPLHRKSGPMSLNPALADGSESEAEDGMLGPQESDPEAPQKQPPQRESYSTTV.

Residues 1–483 (MVTTKMTAAF…EAESQCALKE (483 aa)) form an interaction with alpha-tubulin, gamma-tubulin, BIRC5 and FBXO5 region. Disordered stretches follow at residues 49-80 (VASP…KLSP) and 99-123 (DSKS…SSSA). The segment covering 51 to 78 (SPSASLHTTSSSTTLSTPTQSPSSPSKL) has biased composition (low complexity). 2 positions are modified to phosphoserine: Ser102 and Ser113. The span at 103-123 (LRSVNGSRRNSGSSLVSSSSA) shows a compositional bias: low complexity. The tract at residues 128–693 (SHLEEDSWIL…LNRSDSNQYI (566 aa)) is dimerization. A Rab-GAP TBC domain is found at 163–348 (GIPHHFRAIV…RIFDIFMSEG (186 aa)). The segment at 377–809 (QHFQKVIPHQ…PQRESYSTTV (433 aa)) is targeting to the centrosomes. Residues 406 to 717 (KKMKKLEKEY…RCLKGQRDFS (312 aa)) are a coiled coil. The tract at residues 487-809 (KVLDIEKKNN…PQRESYSTTV (323 aa)) is interaction with AURKB and INCENP. A phosphoserine mark is found at Ser497, Ser689, Ser776, and Ser778. The disordered stretch occupies residues 760-809 (HRKSGPMSLNPALADGSESEAEDGMLGPQESDPEAPQKQPPQRESYSTTV). The span at 799-809 (PPQRESYSTTV) shows a compositional bias: polar residues.

In terms of assembly, dimeric and monomeric. Interacts with alpha- and gamma-tubulin. Interacts with FBXO5. Interacts with the chromosome passenger complex (CPC) which is at least composed of AURKB/aurora-B, BIRC5/survivin, CDCA8/borealin and INCENP. Probably phosphorylated by PLK1; may be required for degradation during mitosis. Post-translationally, ubiquitinated. Degradation during prophase is ubiquitin-dependent. In terms of tissue distribution, widely expressed.

The protein localises to the nucleus. It localises to the cytoplasm. The protein resides in the cytoskeleton. It is found in the microtubule organizing center. Its subcellular location is the centrosome. The protein localises to the spindle. Functionally, functions as a regulator of cell cycle progression by stabilizing the FBXO5 protein and promoting cyclin-A accumulation during interphase. May play a role in cytokinesis. In Mus musculus (Mouse), this protein is Ecotropic viral integration site 5 protein (Evi5).